Here is a 305-residue protein sequence, read N- to C-terminus: MSKKLTFQEIILTLQQFWNDQGCMLMQAYDNEKGAGTMSPYTFLRAIGPEPWNAAYVEPSRRPADGRYGENPNRLYQHHQFQVVMKPSPSNIQELYLQSLELLGINPLEHDIRFVEDNWENPSTGSAGLGWEVWLDGMEITQFTYFQQVGGLPTHPVTAEVTYGLERLASYIQEVDSVYDIEWADGVKYGEIFTHPEYEHSKYSFEVSDQDLLLGNFERFEAEAKRCLDEHLVHPAYDYVLKCSHTFNLLDARGAVSVTERAGYIARIRNLARVVAKTFVAERKRLGYPLLDAETREKLLAEEGE.

Belongs to the class-II aminoacyl-tRNA synthetase family. As to quaternary structure, tetramer of two alpha and two beta subunits.

The protein resides in the cytoplasm. The catalysed reaction is tRNA(Gly) + glycine + ATP = glycyl-tRNA(Gly) + AMP + diphosphate. The protein is Glycine--tRNA ligase alpha subunit of Streptococcus sanguinis (strain SK36).